A 218-amino-acid chain; its full sequence is Probable glutamine ABC transporter permease protein GlnP (218 aa).

3 consecutive transmembrane segments (helical) span residues 19 to 39 (FLVT…FGLI), 65 to 85 (LPLL…GIKL), and 188 to 208 (FFPI…SLSL). Residues 19–210 (FLVTLYVAFI…AVNYSLSLAA (192 aa)) form the ABC transmembrane type-1 domain.

The protein belongs to the binding-protein-dependent transport system permease family. In terms of assembly, the complex is composed of two ATP-binding proteins (GlnQ), two transmembrane proteins (GlnM and GlnP) and a solute-binding protein (GlnH).

The protein resides in the cell membrane. Functionally, part of the ABC transporter complex GlnHMPQ involved in glutamine transport. Probably responsible for the translocation of the substrate across the membrane. The chain is Probable glutamine ABC transporter permease protein GlnP (glnP) from Bacillus subtilis (strain 168).